A 442-amino-acid chain; its full sequence is 3-phosphoshikimate 1-carboxyvinyltransferase (442 aa).

Positions 23, 24, and 28 each coordinate 3-phosphoshikimate. Lys23 serves as a coordination point for phosphoenolpyruvate. Phosphoenolpyruvate is bound by residues Gly95 and Arg123. Residues Ser167, Gln169, Asp315, and Lys342 each coordinate 3-phosphoshikimate. Phosphoenolpyruvate is bound at residue Gln169. Asp315 (proton acceptor) is an active-site residue. Positions 346 and 390 each coordinate phosphoenolpyruvate.

The protein belongs to the EPSP synthase family. In terms of assembly, monomer.

Its subcellular location is the cytoplasm. It catalyses the reaction 3-phosphoshikimate + phosphoenolpyruvate = 5-O-(1-carboxyvinyl)-3-phosphoshikimate + phosphate. It participates in metabolic intermediate biosynthesis; chorismate biosynthesis; chorismate from D-erythrose 4-phosphate and phosphoenolpyruvate: step 6/7. Functionally, catalyzes the transfer of the enolpyruvyl moiety of phosphoenolpyruvate (PEP) to the 5-hydroxyl of shikimate-3-phosphate (S3P) to produce enolpyruvyl shikimate-3-phosphate and inorganic phosphate. The polypeptide is 3-phosphoshikimate 1-carboxyvinyltransferase (Dichelobacter nodosus (strain VCS1703A)).